Reading from the N-terminus, the 302-residue chain is 4-hydroxy-tetrahydrodipicolinate synthase (302 aa).

Pyruvate is bound at residue T55. Residue Y144 is the Proton donor/acceptor of the active site. K172 acts as the Schiff-base intermediate with substrate in catalysis. V214 is a binding site for pyruvate.

This sequence belongs to the DapA family. In terms of assembly, homotetramer; dimer of dimers.

The protein resides in the cytoplasm. The enzyme catalyses L-aspartate 4-semialdehyde + pyruvate = (2S,4S)-4-hydroxy-2,3,4,5-tetrahydrodipicolinate + H2O + H(+). The protein operates within amino-acid biosynthesis; L-lysine biosynthesis via DAP pathway; (S)-tetrahydrodipicolinate from L-aspartate: step 3/4. Its function is as follows. Catalyzes the condensation of (S)-aspartate-beta-semialdehyde [(S)-ASA] and pyruvate to 4-hydroxy-tetrahydrodipicolinate (HTPA). This is 4-hydroxy-tetrahydrodipicolinate synthase from Prochlorococcus marinus (strain SARG / CCMP1375 / SS120).